A 247-amino-acid chain; its full sequence is Uridylate kinase (247 aa).

Lysine 17–glycine 20 is an ATP binding site. A UMP-binding site is contributed by glycine 59. The ATP site is built by glycine 60 and arginine 64. UMP is bound by residues aspartate 79 and threonine 140–threonine 147. Residues threonine 167, tyrosine 173, and aspartate 176 each contribute to the ATP site.

Belongs to the UMP kinase family. Homohexamer.

It is found in the cytoplasm. It catalyses the reaction UMP + ATP = UDP + ADP. Its pathway is pyrimidine metabolism; CTP biosynthesis via de novo pathway; UDP from UMP (UMPK route): step 1/1. With respect to regulation, inhibited by UTP. Functionally, catalyzes the reversible phosphorylation of UMP to UDP. The polypeptide is Uridylate kinase (Legionella pneumophila (strain Paris)).